The chain runs to 610 residues: Probable galacturonosyltransferase 5 (610 aa).

The Cytoplasmic segment spans residues 1–6 (MNQVRR). A helical; Signal-anchor for type II membrane protein membrane pass occupies residues 7–27 (WQRILILSLLLLSVLAPIVFV). The Lumenal segment spans residues 28 to 610 (SNRLKSITSV…PHLQRCNIHD (583 aa)). The segment covering 86–101 (LSNSSDKSNDTVQSNE) has biased composition (polar residues). The segment at 86-170 (LSNSSDKSND…KNTRVQLERA (85 aa)) is disordered. N-linked (GlcNAc...) asparagine glycosylation is found at Asn-88 and Asn-94. The segment covering 110 to 123 (EVDKGNNHKPKEEQ) has biased composition (basic and acidic residues). A compositionally biased stretch (polar residues) spans 124 to 135 (AVSQKTTVSSNA). Residues 139-170 (ISARDIQLNHKTEFRPPSSKSEKNTRVQLERA) are compositionally biased toward basic and acidic residues. Residues Asn-196, Asn-338, Asn-401, and Asn-475 are each glycosylated (N-linked (GlcNAc...) asparagine).

The protein belongs to the glycosyltransferase 8 family. Expressed in roots, inflorescences, siliques, leaves and stems.

It localises to the golgi apparatus membrane. It participates in glycan metabolism; pectin biosynthesis. In terms of biological role, may be involved in pectin and/or xylans biosynthesis in cell walls. The sequence is that of Probable galacturonosyltransferase 5 (GAUT5) from Arabidopsis thaliana (Mouse-ear cress).